We begin with the raw amino-acid sequence, 434 residues long: UDP-glucuronate 4-epimerase 2 (434 aa).

Transmembrane regions (helical) follow at residues 32–52 (SVAK…IFFY) and 91–111 (GVSV…SAAL). 93 to 124 (SVLVTGAAGFVGTHVSAALKRRGDGVLGLDNF) is a binding site for NAD(+). Tyr243 serves as the catalytic Proton acceptor.

The protein belongs to the NAD(P)-dependent epimerase/dehydratase family. As to quaternary structure, homodimer. In roots, leaves, siliques, flowers, pollen and stems.

It is found in the golgi apparatus. Its subcellular location is the golgi stack membrane. It carries out the reaction UDP-alpha-D-glucuronate = UDP-alpha-D-galacturonate. In terms of biological role, involved in the synthesis of the negatively charged monosaccharide that forms the backbone of pectic cell wall components. In Arabidopsis thaliana (Mouse-ear cress), this protein is UDP-glucuronate 4-epimerase 2 (GAE2).